Reading from the N-terminus, the 1463-residue chain is DNA polymerase III PolC-type (1463 aa).

One can recognise an Exonuclease domain in the interval 425 to 581 (YVVFDVETTG…YDAEATGRLL (157 aa)).

This sequence belongs to the DNA polymerase type-C family. PolC subfamily.

Its subcellular location is the cytoplasm. It catalyses the reaction DNA(n) + a 2'-deoxyribonucleoside 5'-triphosphate = DNA(n+1) + diphosphate. Required for replicative DNA synthesis. This DNA polymerase also exhibits 3' to 5' exonuclease activity. In Streptococcus suis (strain 98HAH33), this protein is DNA polymerase III PolC-type.